The sequence spans 429 residues: UDP-N-acetylglucosamine 1-carboxyvinyltransferase (429 aa).

22-23 serves as a coordination point for phosphoenolpyruvate; that stretch reads KN. Arg-102 is a UDP-N-acetyl-alpha-D-glucosamine binding site. Cys-126 serves as the catalytic Proton donor. Cys-126 carries the 2-(S-cysteinyl)pyruvic acid O-phosphothioketal modification. Residues 171 to 174, Asp-316, and Ile-338 contribute to the UDP-N-acetyl-alpha-D-glucosamine site; that span reads KVSV.

The protein belongs to the EPSP synthase family. MurA subfamily.

It is found in the cytoplasm. The enzyme catalyses phosphoenolpyruvate + UDP-N-acetyl-alpha-D-glucosamine = UDP-N-acetyl-3-O-(1-carboxyvinyl)-alpha-D-glucosamine + phosphate. It functions in the pathway cell wall biogenesis; peptidoglycan biosynthesis. Cell wall formation. Adds enolpyruvyl to UDP-N-acetylglucosamine. The polypeptide is UDP-N-acetylglucosamine 1-carboxyvinyltransferase (Xanthobacter autotrophicus (strain ATCC BAA-1158 / Py2)).